The sequence spans 381 residues: Layilin (381 aa).

Residues 1 to 24 (MQPGAALQAMLLAVLLAKPRDSKG) form the signal peptide. Topologically, residues 25–235 (RLLSASDLDP…ERREAALNLA (211 aa)) are extracellular. Positions 45–185 (TRRPCYKVIY…CNMKNNFICK (141 aa)) constitute a C-type lectin domain. Disulfide bonds link Cys-71–Cys-184 and Cys-150–Cys-176. A glycan (N-linked (GlcNAc...) asparagine) is linked at Asn-117. A helical membrane pass occupies residues 236–256 (YILIPSIPLFLLLVVTSAVCW). Residues 257–381 (VWICRRKREQ…SGWVENEIYY (125 aa)) lie on the Cytoplasmic side of the membrane. 2 positions are modified to phosphoserine: Ser-286 and Ser-299. The interaction with NF2 stretch occupies residues 330 to 374 (DYENIAVNPSESGFVTLASMESGFVTNDIYEFSPDRMGRSKESGW). The interaction with TLN1 stretch occupies residues 337–381 (NPSESGFVTLASMESGFVTNDIYEFSPDRMGRSKESGWVENEIYY). Repeat copies occupy residues 340–344 (ESGFV), 350–354 (ESGFV), 356–359 (NDIY), 371–375 (ESGWV), and 377–380 (NEIY). Residues 340 to 375 (ESGFVTLASMESGFVTNDIYEFSPDRMGRSKESGWV) are 3 X 5 AA repeats of E-S-G-X-V. The segment at 356–380 (NDIYEFSPDRMGRSKESGWVENEIY) is 2 X 4 AA repeats of N-X-I-Y.

Interacts with TLN1. Interacts with NF2 and RDX.

It localises to the membrane. In terms of biological role, receptor for hyaluronate. This chain is Layilin (Layn), found in Mus musculus (Mouse).